Consider the following 892-residue polypeptide: Alanine--tRNA ligase (892 aa).

Histidine 574, histidine 578, cysteine 677, and histidine 681 together coordinate Zn(2+).

Belongs to the class-II aminoacyl-tRNA synthetase family. It depends on Zn(2+) as a cofactor.

The protein resides in the cytoplasm. It carries out the reaction tRNA(Ala) + L-alanine + ATP = L-alanyl-tRNA(Ala) + AMP + diphosphate. Functionally, catalyzes the attachment of alanine to tRNA(Ala) in a two-step reaction: alanine is first activated by ATP to form Ala-AMP and then transferred to the acceptor end of tRNA(Ala). Also edits incorrectly charged Ser-tRNA(Ala) and Gly-tRNA(Ala) via its editing domain. This Mesoplasma florum (strain ATCC 33453 / NBRC 100688 / NCTC 11704 / L1) (Acholeplasma florum) protein is Alanine--tRNA ligase.